Consider the following 945-residue polypeptide: Netrin receptor UNC5B (945 aa).

The N-terminal stretch at 1–26 (MRARSGARGALLLALLLCWDPTPSLA) is a signal peptide. At 27 to 377 (GIDSGGQALP…LEPSGDVALY (351 aa)) the chain is on the extracellular side. The region spanning 48–145 (PHFLLEPEDA…SGTTKSRRAY (98 aa)) is the Ig-like domain. Cystine bridges form between Cys69–Cys130, Cys81–Cys128, Cys174–Cys225, Cys258–Cys295, Cys262–Cys299, Cys273–Cys285, Cys314–Cys348, Cys318–Cys353, and Cys326–Cys338. In terms of domain architecture, Ig-like C2-type spans 153 to 242 (KNFDQEPLAK…KRRSTTATVI (90 aa)). Asn222 carries N-linked (GlcNAc...) asparagine glycosylation. TSP type-1 domains lie at 246-300 (NGGW…TVCP) and 302-354 (DGAW…GLCV). Asn347 is a glycosylation site (N-linked (GlcNAc...) asparagine). A helical membrane pass occupies residues 378–398 (AGLVVAVFVVLAVLMAVGVIV). At 399-945 (YRRNCRDFDT…LVAMTTDGDC (547 aa)) the chain is on the cytoplasmic side. Cys403 carries the S-palmitoyl cysteine lipid modification. Positions 543 to 686 (SSVSGTFGCL…LGTYVFTGES (144 aa)) constitute a ZU5 domain. Phosphotyrosine is present on Tyr581. Residues 689-838 (RSAVKRLQLA…AETPAGSLDA (150 aa)) form a UPA domain region. Residues 707 to 725 (SLEYSLRVYCLEDTPAALK) are interaction with DCC. Positions 865-943 (KICNSLDAPN…EMLVAMTTDG (79 aa)) constitute a Death domain.

Belongs to the unc-5 family. As to quaternary structure, interacts with the cytoplasmic part of DCC. Interacts with GNAI2 via its cytoplasmic part. Interacts (via death domain) with DAPK1 (via death domain). Interacts (via extracellular domain) with FLRT3 (via extracellular domain); the interaction is direct. Interacts (via extracellular domain) with FLRT2 and FLRT3 (via extracellular domain), but has higher affinity for FLRT3. Identified in a complex with FLRT3 and ADGRL3; does not interact with ADGRL3 by itself. Phosphorylated on cytoplasmic tyrosine residues. In terms of processing, proteolytically cleaved by caspases during apoptosis. The cleavage does not take place when the receptor is associated with netrin ligand. Its cleavage by caspases is required to induce apoptosis. Post-translationally, palmitoylation is required for pro-apoptotic activity, but not for location at lipid rafts. In terms of tissue distribution, mainly expressed in regions of differentiating neurons. Expressed in the developing sensory ganglia that flank the spinal cord from E12, peaking at E14. Expressed in the roof plate region of the spinal cord from E14.

It localises to the cell membrane. The protein resides in the membrane raft. Functionally, receptor for netrin required for axon guidance. Mediates axon repulsion of neuronal growth cones in the developing nervous system upon ligand binding. Axon repulsion in growth cones may be caused by its association with DCC that may trigger signaling for repulsion. Functions as a netrin receptor that negatively regulates vascular branching during angiogenesis. Mediates retraction of tip cell filopodia on endothelial growth cones in response to netrin. It also acts as a dependence receptor required for apoptosis induction when not associated with netrin ligand. Mediates apoptosis by activating DAPK1. In the absence of NTN1, activates DAPK1 by reducing its autoinhibitory phosphorylation at Ser-308 thereby increasing its catalytic activity. The chain is Netrin receptor UNC5B (Unc5b) from Rattus norvegicus (Rat).